The sequence spans 533 residues: Chromosomal replication initiator protein DnaA (533 aa).

The domain I, interacts with DnaA modulators stretch occupies residues 1-72; that stretch reads MNDFWQHCSA…DLARDFWNAP (72 aa). The tract at residues 72 to 196 is domain II; that stretch reads PIEVQFVLDP…EAADSMYERS (125 aa). The tract at residues 83–110 is disordered; sequence AGQRSPAGATPLAPRAPLPSANPAPVGP. Over residues 96-110 the composition is skewed to pro residues; that stretch reads PRAPLPSANPAPVGP. Residues 197–413 are domain III, AAA+ region; the sequence is KLNPVLTFDN…GALRKILAYS (217 aa). Gly-241, Gly-243, Lys-244, and Thr-245 together coordinate ATP. The interval 414-533 is domain IV, binds dsDNA; that stretch reads KFHGREITIE…LHVLEQTLKG (120 aa).

It belongs to the DnaA family. In terms of assembly, oligomerizes as a right-handed, spiral filament on DNA at oriC.

The protein resides in the cytoplasm. Its function is as follows. Plays an essential role in the initiation and regulation of chromosomal replication. ATP-DnaA binds to the origin of replication (oriC) to initiate formation of the DNA replication initiation complex once per cell cycle. Binds the DnaA box (a 9 base pair repeat at the origin) and separates the double-stranded (ds)DNA. Forms a right-handed helical filament on oriC DNA; dsDNA binds to the exterior of the filament while single-stranded (ss)DNA is stabiized in the filament's interior. The ATP-DnaA-oriC complex binds and stabilizes one strand of the AT-rich DNA unwinding element (DUE), permitting loading of DNA polymerase. After initiation quickly degrades to an ADP-DnaA complex that is not apt for DNA replication. Binds acidic phospholipids. This is Chromosomal replication initiator protein DnaA from Burkholderia mallei (strain NCTC 10247).